The chain runs to 414 residues: Putative transporter AmpG 4 (414 aa).

Helical transmembrane passes span 15–35 (IFIL…TLSV), 44–63 (IAVI…KVFW), 84–104 (WLIL…KENP), 109–129 (TSLY…DIAV), 150–170 (VFGY…LAEI), 177–197 (LTFV…ITVN), 230–250 (FAVT…MLGA), 268–288 (IIAK…GGIV), 295–315 (FKGL…FIWL), 324–344 (ALLI…TALV), 360–379 (YALL…IYAG), and 389–409 (GFFI…MYLN).

The protein belongs to the major facilitator superfamily.

It is found in the cell inner membrane. This chain is Putative transporter AmpG 4 (ampG4), found in Rickettsia felis (strain ATCC VR-1525 / URRWXCal2) (Rickettsia azadi).